The chain runs to 536 residues: Formate--tetrahydrofolate ligase (536 aa).

Residue 51–58 participates in ATP binding; it reads TPAGEGKT.

Belongs to the formate--tetrahydrofolate ligase family.

It catalyses the reaction (6S)-5,6,7,8-tetrahydrofolate + formate + ATP = (6R)-10-formyltetrahydrofolate + ADP + phosphate. The protein operates within one-carbon metabolism; tetrahydrofolate interconversion. This chain is Formate--tetrahydrofolate ligase, found in Thermoplasma acidophilum (strain ATCC 25905 / DSM 1728 / JCM 9062 / NBRC 15155 / AMRC-C165).